Here is a 66-residue protein sequence, read N- to C-terminus: uncharacterized protein (66 aa).

A run of 2 helical transmembrane segments spans residues 6–26 (KIIMILGAVLLIIGAVLHFVG) and 39–59 (VTFFFPVVTCIIISVVLSILL).

Its subcellular location is the cell membrane. This is an uncharacterized protein from Bacillus subtilis (strain 168).